The sequence spans 100 residues: Urease subunit gamma (100 aa).

It belongs to the urease gamma subunit family. In terms of assembly, heterotrimer of UreA (gamma), UreB (beta) and UreC (alpha) subunits. Three heterotrimers associate to form the active enzyme.

It localises to the cytoplasm. The catalysed reaction is urea + 2 H2O + H(+) = hydrogencarbonate + 2 NH4(+). Its pathway is nitrogen metabolism; urea degradation; CO(2) and NH(3) from urea (urease route): step 1/1. The protein is Urease subunit gamma of Edwardsiella ictaluri (strain 93-146).